The following is a 739-amino-acid chain: Phosphoribosylformylglycinamidine synthase subunit PurL (739 aa).

Residue histidine 54 is part of the active site. 2 residues coordinate ATP: tyrosine 57 and lysine 96. Residue glutamate 98 participates in Mg(2+) binding. Substrate contacts are provided by residues 99 to 102 (SHNH) and arginine 121. Histidine 100 (proton acceptor) is an active-site residue. Position 122 (aspartate 122) interacts with Mg(2+). A substrate-binding site is contributed by glutamine 245. Aspartate 273 is a binding site for Mg(2+). 317–319 (ESQ) contributes to the substrate binding site. ATP-binding residues include aspartate 500 and glycine 537. Asparagine 538 serves as a coordination point for Mg(2+). Serine 540 contacts substrate.

This sequence belongs to the FGAMS family. In terms of assembly, monomer. Part of the FGAM synthase complex composed of 1 PurL, 1 PurQ and 2 PurS subunits.

It is found in the cytoplasm. It carries out the reaction N(2)-formyl-N(1)-(5-phospho-beta-D-ribosyl)glycinamide + L-glutamine + ATP + H2O = 2-formamido-N(1)-(5-O-phospho-beta-D-ribosyl)acetamidine + L-glutamate + ADP + phosphate + H(+). It participates in purine metabolism; IMP biosynthesis via de novo pathway; 5-amino-1-(5-phospho-D-ribosyl)imidazole from N(2)-formyl-N(1)-(5-phospho-D-ribosyl)glycinamide: step 1/2. Its function is as follows. Part of the phosphoribosylformylglycinamidine synthase complex involved in the purines biosynthetic pathway. Catalyzes the ATP-dependent conversion of formylglycinamide ribonucleotide (FGAR) and glutamine to yield formylglycinamidine ribonucleotide (FGAM) and glutamate. The FGAM synthase complex is composed of three subunits. PurQ produces an ammonia molecule by converting glutamine to glutamate. PurL transfers the ammonia molecule to FGAR to form FGAM in an ATP-dependent manner. PurS interacts with PurQ and PurL and is thought to assist in the transfer of the ammonia molecule from PurQ to PurL. The polypeptide is Phosphoribosylformylglycinamidine synthase subunit PurL (Bacillus cereus (strain ZK / E33L)).